We begin with the raw amino-acid sequence, 76 residues long: uncharacterized protein (76 aa).

The disordered stretch occupies residues 27 to 76; it reads SINNGEGSSVVHRDATAPPTPPVVPTSTLQVPGLQRARTPEPNDPRVANL.

This is an uncharacterized protein from Caenorhabditis elegans.